The sequence spans 393 residues: Acetyl-CoA acetyltransferase (393 aa).

C88 (acyl-thioester intermediate) is an active-site residue. Catalysis depends on proton acceptor residues H349 and C379.

Belongs to the thiolase-like superfamily. Thiolase family. Homotetramer.

It localises to the cytoplasm. The catalysed reaction is 2 acetyl-CoA = acetoacetyl-CoA + CoA. The protein operates within biopolymer metabolism; poly-(R)-3-hydroxybutanoate biosynthesis. The condensation reaction is inhibited by free CoA. The cleavage reaction is characterized by substrate inhibition by acetoacetyl-CoA, which is partially relieved by free CoA. Catalyzes the condensation of two acetyl-coA units to form acetoacetyl-CoA. Is involved in the biosynthesis of polyhydroxybutyrate (PHB), which is accumulated as an intracellular energy reserve material when cells grow under conditions of nutrient limitation. Also catalyzes the reverse reaction, i.e. the cleavage of acetoacetyl-CoA, and is therefore also involved in the reutilization of PHB. This chain is Acetyl-CoA acetyltransferase, found in Cupriavidus necator (strain ATCC 17699 / DSM 428 / KCTC 22496 / NCIMB 10442 / H16 / Stanier 337) (Ralstonia eutropha).